The following is a 69-amino-acid chain: Large ribosomal subunit protein uL29 (69 aa).

This sequence belongs to the universal ribosomal protein uL29 family.

The sequence is that of Large ribosomal subunit protein uL29 from Carboxydothermus hydrogenoformans (strain ATCC BAA-161 / DSM 6008 / Z-2901).